The following is a 1408-amino-acid chain: ARF guanine-nucleotide exchange factor 1 (1408 aa).

Phosphoserine is present on S49. The tract at residues 262–287 (TTTSDNDLSSTDDDSAVADDNKNEKP) is disordered. Positions 552-706 (FNEKAKKGIQ…IIMLNTDSHN (155 aa)) constitute an SEC7 domain.

As to quaternary structure, interacts (via N-terminal region) with SEC21 (via C-terminus). Interacts with GMH1. Interacts with DRS2.

It localises to the cytoplasm. It is found in the cytosol. Its subcellular location is the membrane. The protein resides in the endoplasmic reticulum. The protein localises to the mitochondrion. In terms of biological role, activates the ARF proteins by exchanging bound GDP for free GTP. Plays a role in maintaining mitochondrial morphology, and in the turnover of mitochondria through mitophagy. The sequence is that of ARF guanine-nucleotide exchange factor 1 (GEA1) from Saccharomyces cerevisiae (strain ATCC 204508 / S288c) (Baker's yeast).